We begin with the raw amino-acid sequence, 439 residues long: Glucose-1-phosphate adenylyltransferase (439 aa).

Residues Tyr116, Gly182, 197–198 (EK), and Ser215 contribute to the alpha-D-glucose 1-phosphate site.

Belongs to the bacterial/plant glucose-1-phosphate adenylyltransferase family. Homotetramer.

The catalysed reaction is alpha-D-glucose 1-phosphate + ATP + H(+) = ADP-alpha-D-glucose + diphosphate. Its pathway is glycan biosynthesis; glycogen biosynthesis. Involved in the biosynthesis of ADP-glucose, a building block required for the elongation reactions to produce glycogen. Catalyzes the reaction between ATP and alpha-D-glucose 1-phosphate (G1P) to produce pyrophosphate and ADP-Glc. This Pasteurella multocida (strain Pm70) protein is Glucose-1-phosphate adenylyltransferase.